Consider the following 50-residue polypeptide: Photosystem II reaction center protein M (50 aa).

The chain crosses the membrane as a helical span at residues 7–27 (GFVASLLFVGVPTIFLIGLFI).

This sequence belongs to the PsbM family. In terms of assembly, PSII is composed of 1 copy each of membrane proteins PsbA, PsbB, PsbC, PsbD, PsbE, PsbF, PsbH, PsbI, PsbJ, PsbK, PsbL, PsbM, PsbT, PsbX, PsbY, Psb30/Ycf12, peripheral proteins PsbO, CyanoQ (PsbQ), PsbU, PsbV and a large number of cofactors. It forms dimeric complexes.

It is found in the cellular thylakoid membrane. Functionally, one of the components of the core complex of photosystem II (PSII). PSII is a light-driven water:plastoquinone oxidoreductase that uses light energy to abstract electrons from H(2)O, generating O(2) and a proton gradient subsequently used for ATP formation. It consists of a core antenna complex that captures photons, and an electron transfer chain that converts photonic excitation into a charge separation. This subunit is found at the monomer-monomer interface. In Prochlorococcus marinus (strain MIT 9301), this protein is Photosystem II reaction center protein M.